A 303-amino-acid polypeptide reads, in one-letter code: D-alanine--D-alanine ligase (303 aa).

In terms of domain architecture, ATP-grasp spans Lys100–Glu295. Gly127–Thr180 is an ATP binding site. Positions 249, 262, and 264 each coordinate Mg(2+).

This sequence belongs to the D-alanine--D-alanine ligase family. Mg(2+) is required as a cofactor. Mn(2+) serves as cofactor.

The protein localises to the cytoplasm. The enzyme catalyses 2 D-alanine + ATP = D-alanyl-D-alanine + ADP + phosphate + H(+). It participates in cell wall biogenesis; peptidoglycan biosynthesis. In terms of biological role, cell wall formation. This Nitratidesulfovibrio vulgaris (strain DP4) (Desulfovibrio vulgaris) protein is D-alanine--D-alanine ligase.